The primary structure comprises 107 residues: UPF0060 membrane protein Atu1058 (107 aa).

A run of 4 helical transmembrane segments spans residues 5 to 25 (LIYV…WAWL), 32 to 52 (WILL…TLVA), 59 to 79 (AYAA…WGVE), and 85 to 105 (RWDI…LFGP).

It belongs to the UPF0060 family.

Its subcellular location is the cell inner membrane. This is UPF0060 membrane protein Atu1058 from Agrobacterium fabrum (strain C58 / ATCC 33970) (Agrobacterium tumefaciens (strain C58)).